The sequence spans 237 residues: Leucyl/phenylalanyl-tRNA--protein transferase (237 aa).

It belongs to the L/F-transferase family.

It localises to the cytoplasm. It carries out the reaction N-terminal L-lysyl-[protein] + L-leucyl-tRNA(Leu) = N-terminal L-leucyl-L-lysyl-[protein] + tRNA(Leu) + H(+). The catalysed reaction is N-terminal L-arginyl-[protein] + L-leucyl-tRNA(Leu) = N-terminal L-leucyl-L-arginyl-[protein] + tRNA(Leu) + H(+). It catalyses the reaction L-phenylalanyl-tRNA(Phe) + an N-terminal L-alpha-aminoacyl-[protein] = an N-terminal L-phenylalanyl-L-alpha-aminoacyl-[protein] + tRNA(Phe). Its function is as follows. Functions in the N-end rule pathway of protein degradation where it conjugates Leu, Phe and, less efficiently, Met from aminoacyl-tRNAs to the N-termini of proteins containing an N-terminal arginine or lysine. This is Leucyl/phenylalanyl-tRNA--protein transferase from Shewanella baltica (strain OS223).